The sequence spans 110 residues: Iron-sulfur cluster assembly protein CyaY (110 aa).

The protein belongs to the frataxin family.

In terms of biological role, involved in iron-sulfur (Fe-S) cluster assembly. May act as a regulator of Fe-S biogenesis. This chain is Iron-sulfur cluster assembly protein CyaY, found in Pseudomonas fluorescens (strain SBW25).